The primary structure comprises 257 residues: Acetyl-coenzyme A carboxylase carboxyl transferase subunit beta 1 (257 aa).

Positions 1–257 (MNINDIFLKR…KMHVNTGGEA (257 aa)) constitute a CoA carboxyltransferase N-terminal domain.

This sequence belongs to the AccD/PCCB family. In terms of assembly, acetyl-CoA carboxylase is a heterohexamer composed of biotin carboxyl carrier protein (AccB), biotin carboxylase (AccC) and two subunits each of ACCase subunit alpha (AccA) and ACCase subunit beta (AccD).

It localises to the cytoplasm. The catalysed reaction is N(6)-carboxybiotinyl-L-lysyl-[protein] + acetyl-CoA = N(6)-biotinyl-L-lysyl-[protein] + malonyl-CoA. It participates in lipid metabolism; malonyl-CoA biosynthesis; malonyl-CoA from acetyl-CoA: step 1/1. Functionally, component of the acetyl coenzyme A carboxylase (ACC) complex. Biotin carboxylase (BC) catalyzes the carboxylation of biotin on its carrier protein (BCCP) and then the CO(2) group is transferred by the transcarboxylase to acetyl-CoA to form malonyl-CoA. The sequence is that of Acetyl-coenzyme A carboxylase carboxyl transferase subunit beta 1 from Lachnospira eligens (strain ATCC 27750 / DSM 3376 / VPI C15-48 / C15-B4) (Eubacterium eligens).